The sequence spans 226 residues: Deoxyribose-phosphate aldolase (226 aa).

Residue D84 is the Proton donor/acceptor of the active site. K146 (schiff-base intermediate with acetaldehyde) is an active-site residue. K188 serves as the catalytic Proton donor/acceptor.

Belongs to the DeoC/FbaB aldolase family. DeoC type 1 subfamily. In terms of assembly, homodimer.

The protein localises to the cytoplasm. The enzyme catalyses 2-deoxy-D-ribose 5-phosphate = D-glyceraldehyde 3-phosphate + acetaldehyde. It functions in the pathway carbohydrate degradation; 2-deoxy-D-ribose 1-phosphate degradation; D-glyceraldehyde 3-phosphate and acetaldehyde from 2-deoxy-alpha-D-ribose 1-phosphate: step 2/2. Its function is as follows. Catalyzes a reversible aldol reaction between acetaldehyde and D-glyceraldehyde 3-phosphate to generate 2-deoxy-D-ribose 5-phosphate. This Pyrobaculum aerophilum (strain ATCC 51768 / DSM 7523 / JCM 9630 / CIP 104966 / NBRC 100827 / IM2) protein is Deoxyribose-phosphate aldolase.